The primary structure comprises 86 residues: Small ribosomal subunit protein bS20 (86 aa).

Residues 1–27 form a disordered region; sequence MANNKSAKKRAIQAEKRRQHNASRRSM.

The protein belongs to the bacterial ribosomal protein bS20 family.

Binds directly to 16S ribosomal RNA. In Vibrio vulnificus (strain CMCP6), this protein is Small ribosomal subunit protein bS20.